We begin with the raw amino-acid sequence, 429 residues long: Trigger factor (429 aa).

Residues 163–248 (GDFVVIDFVG…IKEIKVKETP (86 aa)) form the PPIase FKBP-type domain.

This sequence belongs to the FKBP-type PPIase family. Tig subfamily.

The protein localises to the cytoplasm. It carries out the reaction [protein]-peptidylproline (omega=180) = [protein]-peptidylproline (omega=0). In terms of biological role, involved in protein export. Acts as a chaperone by maintaining the newly synthesized protein in an open conformation. Functions as a peptidyl-prolyl cis-trans isomerase. The polypeptide is Trigger factor (Halothermothrix orenii (strain H 168 / OCM 544 / DSM 9562)).